Consider the following 268-residue polypeptide: MSDTKVYLLDGGSLVLDGYHVFWNRGPGGEVRFPVYSILIEHAEGRFLIDTGYDYDHVMKVLPFEKPIQEKHQTIPGALGLLGLEPRDIDVVVNSHFHFDHCGGNKYFPHAKKICHRSEVPQACNPQPFEHLGYSDLSFSAEAAEARGATAQLLEGTTRANSTFEGIDGDVDLARGVKLISTPGHSIGHYSLLVEFPRRKPILFTIDAAYTQKSLETLCQAAFHIDPVAGVNSMRKVKKLAEDHGAELMYSHDMDNFKTYRTGTQFYG.

Zn(2+) contacts are provided by His96, His98, Asp100, His101, His185, Asp207, and His252. The active-site Proton donor/acceptor is Asp100.

This sequence belongs to the metallo-beta-lactamase superfamily. In terms of assembly, homodimer. The cofactor is Zn(2+).

It catalyses the reaction 4-pyridoxolactone + H2O = 4-pyridoxate + H(+). It functions in the pathway cofactor degradation; B6 vitamer degradation; 4-pyridoxate from pyridoxal: step 2/2. Inhibited by Hg(2+). Its function is as follows. Involved in the degradation of pyridoxine or pyridoxamine (free, phosphate-unbound, forms of vitamin B6). Hydrolyzes 4-pyridoxolactone to 4-pyridoxic acid. Has lower activity toward N-hexanoyl-D,L-homoserine lactone, but is not active toward 5-pyridoxolactone and gamma-butyrolactone. The protein is 4-pyridoxolactonase of Mesorhizobium japonicum (strain LMG 29417 / CECT 9101 / MAFF 303099) (Mesorhizobium loti (strain MAFF 303099)).